A 302-amino-acid chain; its full sequence is uncharacterized protein (302 aa).

The next 9 helical transmembrane spans lie at 1–21 (MSWI…LGVI), 33–53 (SLLF…YIYY), 67–87 (FLIE…IFQF), 101–121 (FGII…IILI), 124–144 (FSWL…KTFY), 185–205 (YVTP…VFAI), 220–240 (IIYT…FCLA), 253–273 (LALI…IAIP), and 274–294 (AYIS…ASVI).

This sequence belongs to the TerC family.

Its subcellular location is the cell membrane. This is an uncharacterized protein from Rickettsia bellii (strain RML369-C).